Reading from the N-terminus, the 138-residue chain is Integration host factor subunit beta (138 aa).

Residues 81-98 are compositionally biased toward basic and acidic residues; it reads KAGKELRERVDRSLERQG. Positions 81–138 are disordered; it reads KAGKELRERVDRSLERQGDSSSEGEPVSLTAVKAARQAGGHHAAGFPAEATPTLVMSR.

The protein belongs to the bacterial histone-like protein family. As to quaternary structure, heterodimer of an alpha and a beta chain.

This protein is one of the two subunits of integration host factor, a specific DNA-binding protein that functions in genetic recombination as well as in transcriptional and translational control. The chain is Integration host factor subunit beta from Ralstonia nicotianae (strain ATCC BAA-1114 / GMI1000) (Ralstonia solanacearum).